Here is a 157-residue protein sequence, read N- to C-terminus: 2-C-methyl-D-erythritol 2,4-cyclodiphosphate synthase (157 aa).

A divalent metal cation-binding residues include Asp8 and His10. 4-CDP-2-C-methyl-D-erythritol 2-phosphate-binding positions include 8-10 (DVH) and 34-35 (HS). A divalent metal cation is bound at residue His42. 4-CDP-2-C-methyl-D-erythritol 2-phosphate contacts are provided by residues 56 to 58 (DIG), 61 to 65 (FPDTD), 132 to 135 (TTEE), and Phe139.

It belongs to the IspF family. In terms of assembly, homotrimer. It depends on a divalent metal cation as a cofactor.

It carries out the reaction 4-CDP-2-C-methyl-D-erythritol 2-phosphate = 2-C-methyl-D-erythritol 2,4-cyclic diphosphate + CMP. It functions in the pathway isoprenoid biosynthesis; isopentenyl diphosphate biosynthesis via DXP pathway; isopentenyl diphosphate from 1-deoxy-D-xylulose 5-phosphate: step 4/6. In terms of biological role, involved in the biosynthesis of isopentenyl diphosphate (IPP) and dimethylallyl diphosphate (DMAPP), two major building blocks of isoprenoid compounds. Catalyzes the conversion of 4-diphosphocytidyl-2-C-methyl-D-erythritol 2-phosphate (CDP-ME2P) to 2-C-methyl-D-erythritol 2,4-cyclodiphosphate (ME-CPP) with a corresponding release of cytidine 5-monophosphate (CMP). This chain is 2-C-methyl-D-erythritol 2,4-cyclodiphosphate synthase, found in Clostridium botulinum (strain Eklund 17B / Type B).